The sequence spans 543 residues: Protein DETOXIFICATION 47, chloroplastic (543 aa).

The transit peptide at M1–V30 directs the protein to the chloroplast. Residues V55–S94 adopt a coiled-coil conformation. The next 12 membrane-spanning stretches (helical) occupy residues G107 to I127, L135 to L155, V181 to G201, G228 to K248, A256 to G276, G278 to M298, L319 to F339, F342 to A362, I406 to F426, L443 to T463, F472 to T492, and G497 to L517.

Belongs to the multi antimicrobial extrusion (MATE) (TC 2.A.66.1) family. In terms of tissue distribution, preferentially expressed in the epidermal cells.

It is found in the plastid. The protein localises to the chloroplast membrane. Functionally, functions as a multidrug and toxin extrusion transporter in the export of salicylic acid (SA) from the chloroplast to the cytoplasm. Plays an essential function in plant defense via the pathogen-induced salicylic acid (SA) accumulation. Also acts as a key component of the Age-related resistance (ARR) pathway. The sequence is that of Protein DETOXIFICATION 47, chloroplastic from Arabidopsis thaliana (Mouse-ear cress).